Consider the following 479-residue polypeptide: Ammonium transporter Rh type C (479 aa).

At 1–9 (MAWNTNLRW) the chain is on the cytoplasmic side. Residues 10 to 30 (RLPLTCLLLQVIMVILFGVFV) traverse the membrane as a helical segment. The Extracellular segment spans residues 31-60 (RYDFEADAHWWSERTHKNLSDMENEFYYRY). Asn-48 carries N-linked (GlcNAc...) asparagine glycosylation. A helical membrane pass occupies residues 61-81 (PSFQDVHVMVFVGFGFLMTFL). Topologically, residues 82–85 (QRYG) are cytoplasmic. A helical transmembrane segment spans residues 86–106 (FSAVGFNFLLAAFGIQWALLM). Residues 107-123 (QGWFHFLQDRYIVVGVE) lie on the Extracellular side of the membrane. A helical transmembrane segment spans residues 124-144 (NLINADFCVASVCVAFGAVLG). Residues 145–148 (KVSP) lie on the Cytoplasmic side of the membrane. The helical transmembrane segment at 149–169 (IQLLIMTFFQVTLFAVNEFIL) threads the bilayer. Over 170–177 (LNLLKVKD) the chain is Extracellular. Residues 178–200 (AGGSMTIHTFGAYFGLTVTRILY) form a helical membrane-spanning segment. At 201–218 (RRNLEQSKERQNSVYQSD) the chain is on the cytoplasmic side. The helical transmembrane segment at 219–239 (LFAMIGTLFLWMYWPSFNSAI) threads the bilayer. Residues 240–250 (SYHGDSQHRAA) lie on the Extracellular side of the membrane. The chain crosses the membrane as a helical span at residues 251 to 271 (INTYCSLAACVLTSVAISSAL). Topologically, residues 272-281 (HKKGKLDMVH) are cytoplasmic. Residues 282–302 (IQNATLAGGVAVGTAAEMMLM) traverse the membrane as a helical segment. Pro-303 is a topological domain (extracellular). A helical membrane pass occupies residues 304–324 (YGALIIGFVCGIISTLGFVYL). Over 325–345 (TPFLESRLHIQDTCGINNLHG) the chain is Cytoplasmic. A helical transmembrane segment spans residues 346–366 (IPGIIGGIVGAVTAASASLEV). The Extracellular portion of the chain corresponds to 367–394 (YGKEGLVHSFDFQGFNGDWTARTQGKFQ). Residues 395–415 (IYGLLVTLAMALMGGIIVGLI) traverse the membrane as a helical segment. At 416-479 (LRLPFWGQPS…PMASSVPLVP (64 aa)) the chain is on the cytoplasmic side.

The protein belongs to the ammonium transporter (TC 2.A.49) family. Rh subfamily. In terms of assembly, homotrimer. N-glycosylated. In terms of tissue distribution, expressed in brain, testis, placenta, pancreas, esophagus and prostate. Expressed in squamous epithelial tissues (at protein level). Expressed in kidney.

It is found in the cell membrane. Its subcellular location is the apical cell membrane. The catalysed reaction is NH4(+)(in) = NH4(+)(out). It catalyses the reaction methylamine(out) = methylamine(in). The enzyme catalyses CO2(out) = CO2(in). Ammonium transporter involved in the maintenance of acid-base homeostasis. Transports ammonium and its related derivative methylammonium across the plasma membrane of epithelial cells likely contributing to renal transepithelial ammonia transport and ammonia metabolism. Postulated to primarily mediate an electroneutral bidirectional transport of NH3 ammonia species according to a mechanism that implies interaction of an NH4(+) ion with acidic residues of the pore entry followed by dissociation of NH4(+) into NH3 and H(+). As a result NH3 transits through the central pore and is protonated on the extracellular side reforming NH4(+). May act as a CO2 channel providing for renal acid secretion. This is Ammonium transporter Rh type C (RHCG) from Homo sapiens (Human).